The primary structure comprises 198 residues: dTTP/UTP pyrophosphatase (198 aa).

The Proton acceptor role is filled by Asp-78.

The protein belongs to the Maf family. YhdE subfamily. It depends on a divalent metal cation as a cofactor.

It localises to the cytoplasm. The catalysed reaction is dTTP + H2O = dTMP + diphosphate + H(+). It carries out the reaction UTP + H2O = UMP + diphosphate + H(+). In terms of biological role, nucleoside triphosphate pyrophosphatase that hydrolyzes dTTP and UTP. May have a dual role in cell division arrest and in preventing the incorporation of modified nucleotides into cellular nucleic acids. This is dTTP/UTP pyrophosphatase from Chromobacterium violaceum (strain ATCC 12472 / DSM 30191 / JCM 1249 / CCUG 213 / NBRC 12614 / NCIMB 9131 / NCTC 9757 / MK).